Reading from the N-terminus, the 302-residue chain is Glycine--tRNA ligase alpha subunit (302 aa).

Belongs to the class-II aminoacyl-tRNA synthetase family. Tetramer of two alpha and two beta subunits.

The protein resides in the cytoplasm. The enzyme catalyses tRNA(Gly) + glycine + ATP = glycyl-tRNA(Gly) + AMP + diphosphate. The polypeptide is Glycine--tRNA ligase alpha subunit (Edwardsiella ictaluri (strain 93-146)).